We begin with the raw amino-acid sequence, 334 residues long: Phosphate acyltransferase (334 aa).

It belongs to the PlsX family. As to quaternary structure, homodimer. Probably interacts with PlsY.

It is found in the cytoplasm. The catalysed reaction is a fatty acyl-[ACP] + phosphate = an acyl phosphate + holo-[ACP]. It participates in lipid metabolism; phospholipid metabolism. Its function is as follows. Catalyzes the reversible formation of acyl-phosphate (acyl-PO(4)) from acyl-[acyl-carrier-protein] (acyl-ACP). This enzyme utilizes acyl-ACP as fatty acyl donor, but not acyl-CoA. This Caldicellulosiruptor bescii (strain ATCC BAA-1888 / DSM 6725 / KCTC 15123 / Z-1320) (Anaerocellum thermophilum) protein is Phosphate acyltransferase.